Reading from the N-terminus, the 319-residue chain is GCN5-related N-acetyltransferase 5, chloroplastic (319 aa).

The transit peptide at methionine 1–serine 55 directs the protein to the chloroplast. The region spanning methionine 109 to proline 297 is the N-acetyltransferase domain. Residues methionine 218–valine 220, arginine 226–tryptophan 231, aspartate 258–alanine 260, and tyrosine 265 contribute to the acetyl-CoA site. Residue tyrosine 265 is the Proton donor of the active site.

It belongs to the acetyltransferase family. GNAT subfamily. Oligomer. Autoacetylated. As to expression, expressed in green tissues.

It is found in the plastid. It localises to the chloroplast. It carries out the reaction an N-terminal L-alpha-aminoacyl-[protein] + acetyl-CoA = N-terminal N(alpha)-acetyl-L-alpha-aminoacyl-[protein] + CoA + H(+). The enzyme catalyses L-lysyl-[protein] + acetyl-CoA = N(6)-acetyl-L-lysyl-[protein] + CoA + H(+). It catalyses the reaction N-terminal L-alanyl-[protein] + acetyl-CoA = N-terminal N(alpha)-acetyl-L-alanyl-[protein] + CoA + H(+). The catalysed reaction is N-terminal L-seryl-[protein] + acetyl-CoA = N-terminal N(alpha)-acetyl-L-seryl-[protein] + CoA + H(+). It carries out the reaction N-terminal L-methionyl-[protein] + acetyl-CoA = N-terminal N(alpha)-acetyl-L-methionyl-[protein] + CoA + H(+). The enzyme catalyses N-terminal L-valyl-[protein] + acetyl-CoA = N-terminal N(alpha)-acetyl-L-valyl-[protein] + CoA + H(+). It catalyses the reaction N-terminal L-threonyl-[protein] + acetyl-CoA = N-terminal N(alpha)-acetyl-L-threonyl-[protein] + CoA + H(+). Its function is as follows. Protein acetyltransferase with dual specificity triggering both N-alpha-acetylation (NTA), with a large spectrum of modified N-termini, including methionine, alanine, serine and to a lower extent threonine and valine as substrates, and epsilon-lysine acetylation (KA). This is GCN5-related N-acetyltransferase 5, chloroplastic from Arabidopsis thaliana (Mouse-ear cress).